Reading from the N-terminus, the 509-residue chain is Methylmalonyl-CoA decarboxylase subunit alpha (509 aa).

In terms of domain architecture, CoA carboxyltransferase N-terminal spans 4-260 (VQEKIELLHE…NNMEDAPLVD (257 aa)). One can recognise a CoA carboxyltransferase C-terminal domain in the interval 267-503 (REDESLNSLL…SKRENRAPKK (237 aa)).

The protein belongs to the AccD/PCCB family. The methylmalonyl-CoA decarboxylase is composed of five subunits: the carboxyltransferase alpha subunit (MmdA), the tunnel beta subunit (MmdB), the biotin-containing gamma subunit (MmdC), and the delta (MmdD) and epsilon (MmdE) subunits. Interacts with the gamma subunit.

It localises to the cell membrane. The enzyme catalyses (S)-methylmalonyl-CoA + Na(+)(in) + H(+)(out) = propanoyl-CoA + Na(+)(out) + CO2. With respect to regulation, completely inhibited by avidin. Its function is as follows. Carboxyltransferase subunit of the sodium ion pump methylmalonyl-CoA decarboxylase, which converts the chemical energy of a decarboxylation reaction into an electrochemical gradient of Na(+) ions across the cytoplasmic membrane, thereby creating a sodium ion motive force that is used for ATP synthesis. The alpha subunit catalyzes the Na(+)-independent carboxyltransfer from methylmalonyl-CoA to the prosthetic biotin group located on the gamma subunit. Can also convert malonyl-CoA into acetyl-CoA. This Veillonella parvula (Staphylococcus parvulus) protein is Methylmalonyl-CoA decarboxylase subunit alpha.